A 521-amino-acid polypeptide reads, in one-letter code: AAA ATPase forming ring-shaped complexes (521 aa).

A coiled-coil region spans residues threonine 4 to glutamine 44. Glycine 235–methionine 240 is a binding site for ATP.

It belongs to the AAA ATPase family. Homohexamer. Assembles into a hexameric ring structure.

This Bifidobacterium longum (strain NCC 2705) protein is AAA ATPase forming ring-shaped complexes.